The primary structure comprises 223 residues: Ubiquitin carboxyl-terminal hydrolase isozyme L1 (223 aa).

The residue at position 1 (Met-1) is an N-acetylmethionine. Residues 2–221 (QLKPMEINPE…VRFSAVALCK (220 aa)) form the UCH catalytic domain. Residues 5 to 10 (PMEINP) are interaction with ubiquitin. Cys-90 functions as the Nucleophile in the catalytic mechanism. Phosphoserine is present on Ser-125. The active-site Proton donor is His-161. The interaction with ubiquitin stretch occupies residues 211-216 (EVRFSA). Cys-220 is lipidated: S-farnesyl cysteine. A propeptide spans 221-223 (KAA) (removed in mature form).

It belongs to the peptidase C12 family. In terms of assembly, monomer. Homodimer. Interacts with COPS5 and SNCA. In terms of processing, O-glycosylated. Expressed in brain, where it is found in neurons but not in oligodendrocytes or astrocytes. Found in the ganglion cell layer and the inner nuclear layer of the retina (at protein level). Expressed in brain and testis. In the brain, expression is at its lowest in replaceable neurons of hippocampus and olfactory bulb. Highly expressed in senescent pituitary. In skeletal muscle, primarily expressed in oxidative muscle fibers.

It is found in the cytoplasm. Its subcellular location is the endoplasmic reticulum membrane. The catalysed reaction is Thiol-dependent hydrolysis of ester, thioester, amide, peptide and isopeptide bonds formed by the C-terminal Gly of ubiquitin (a 76-residue protein attached to proteins as an intracellular targeting signal).. In terms of biological role, deubiquitinase that plays a role in the regulation of several processes such as maintenance of synaptic function, cardiac function, inflammatory response or osteoclastogenesis. Abrogates the ubiquitination of multiple proteins including WWTR1/TAZ, EGFR, HIF1A and beta-site amyloid precursor protein cleaving enzyme 1/BACE1. In addition, recognizes and hydrolyzes a peptide bond at the C-terminal glycine of ubiquitin to maintain a stable pool of monoubiquitin that is a key requirement for the ubiquitin-proteasome and the autophagy-lysosome pathways. Regulates amyloid precursor protein/APP processing by promoting BACE1 degradation resulting in decreased amyloid beta production. Plays a role in the immune response by regulating the ability of MHC I molecules to reach cross-presentation compartments competent for generating Ag-MHC I complexes. Mediates the 'Lys-48'-linked deubiquitination of the transcriptional coactivator WWTR1/TAZ leading to its stabilization and inhibition of osteoclastogenesis. Deubiquitinates and stabilizes epidermal growth factor receptor EGFR to prevent its degradation and to activate its downstream mediators. Modulates oxidative activity in skeletal muscle by regulating key mitochondrial oxidative proteins. Enhances the activity of hypoxia-inducible factor 1-alpha/HIF1A by abrogateing its VHL E3 ligase-mediated ubiquitination and consequently inhibiting its degradation. The chain is Ubiquitin carboxyl-terminal hydrolase isozyme L1 (Uchl1) from Mus musculus (Mouse).